The following is a 271-amino-acid chain: Tryptophan synthase alpha chain (271 aa).

Residues glutamate 56 and aspartate 67 each act as proton acceptor in the active site.

The protein belongs to the TrpA family. As to quaternary structure, tetramer of two alpha and two beta chains.

It carries out the reaction (1S,2R)-1-C-(indol-3-yl)glycerol 3-phosphate + L-serine = D-glyceraldehyde 3-phosphate + L-tryptophan + H2O. The protein operates within amino-acid biosynthesis; L-tryptophan biosynthesis; L-tryptophan from chorismate: step 5/5. The alpha subunit is responsible for the aldol cleavage of indoleglycerol phosphate to indole and glyceraldehyde 3-phosphate. The sequence is that of Tryptophan synthase alpha chain from Mycobacterium avium (strain 104).